A 325-amino-acid chain; its full sequence is Diadenosine 5',5'''-P1,P4-tetraphosphate phosphorylase 2 (325 aa).

Substrate-binding positions include Lys53, 92 to 93, Asn148, and 154 to 157; these read NK and GSSQ. His161 serves as the catalytic Nucleophile. Residues Gln163, 277–279, Met284, and Lys288 contribute to the substrate site; that span reads NST.

Belongs to the ATP adenylyltransferase family. As to quaternary structure, monomer. A divalent metal cation serves as cofactor.

The protein localises to the cytoplasm. The protein resides in the nucleus. It catalyses the reaction ADP + ATP + H(+) = P(1),P(4)-bis(5'-adenosyl) tetraphosphate + phosphate. The enzyme catalyses sulfate + ADP + H(+) = adenosine 5'-phosphosulfate + phosphate. Ap4A phosphorylase catalyzes the phosphorolytic degradation of bis(5'-adenosyl) tetraphosphate (Ap4A) into ADP and ATP. Can also use other Np4N' nucleotides (where N and N' stand for A,C,G or U) as substrates, but prefers A-containing substrates. Cannot catalyze the reverse reaction. Additionally, this enzyme can also catalyze the phosphorolytic degradation of adenosine 5'-phosphosulfate (AMPS) into ADP and sulfate, the reversible exchange reaction between inorganic phosphate and the beta-phosphate of a nucleoside diphosphate (NDP), and the synthesis of Ap4A from AMPS plus ATP. This is Diadenosine 5',5'''-P1,P4-tetraphosphate phosphorylase 2 from Saccharomyces cerevisiae (strain ATCC 204508 / S288c) (Baker's yeast).